Consider the following 63-residue polypeptide: Alpha-conotoxin-like Sm1.3 (63 aa).

Residues 1–16 (MFTVFLLVVLATTVVS) form the signal peptide. Positions 17 to 43 (SPSDRASDGRNAAANEKASDVIALALK) are excised as a propeptide. 2 disulfide bridges follow: C45/C51 and C46/C59. M58 carries the methionine sulfoxide; partial modification. Cysteine amide; partial is present on C59.

This sequence belongs to the conotoxin A superfamily. As to expression, expressed by the venom duct.

It localises to the secreted. In terms of biological role, alpha-conotoxins act on postsynaptic membranes, they bind to the nicotinic acetylcholine receptors (nAChR) and thus inhibit them. This Conus stercusmuscarum (Fly-specked cone) protein is Alpha-conotoxin-like Sm1.3.